The sequence spans 462 residues: Bifunctional protein GlmU (462 aa).

Residues 1-239 (MTESVSKPVR…EASVQGVNAQ (239 aa)) are pyrophosphorylase. UDP-N-acetyl-alpha-D-glucosamine is bound by residues 17–20 (LAAG), lysine 31, glutamine 84, and 89–90 (GT). Aspartate 114 is a Mg(2+) binding site. Glycine 150, glutamate 165, asparagine 180, and asparagine 237 together coordinate UDP-N-acetyl-alpha-D-glucosamine. Asparagine 237 is a binding site for Mg(2+). The linker stretch occupies residues 240–260 (AELAAAEAVWQQNRRKALMVD). Residues 261–462 (GVTMPAPDTV…QKDKKKDKKA (202 aa)) are N-acetyltransferase. Residues arginine 326 and lysine 344 each coordinate UDP-N-acetyl-alpha-D-glucosamine. The Proton acceptor role is filled by histidine 356. UDP-N-acetyl-alpha-D-glucosamine contacts are provided by tyrosine 359 and asparagine 370. Residues alanine 373, 379–380 (NY), serine 398, serine 416, and arginine 433 each bind acetyl-CoA.

This sequence in the N-terminal section; belongs to the N-acetylglucosamine-1-phosphate uridyltransferase family. In the C-terminal section; belongs to the transferase hexapeptide repeat family. In terms of assembly, homotrimer. Requires Mg(2+) as cofactor.

The protein localises to the cytoplasm. The catalysed reaction is alpha-D-glucosamine 1-phosphate + acetyl-CoA = N-acetyl-alpha-D-glucosamine 1-phosphate + CoA + H(+). The enzyme catalyses N-acetyl-alpha-D-glucosamine 1-phosphate + UTP + H(+) = UDP-N-acetyl-alpha-D-glucosamine + diphosphate. It functions in the pathway nucleotide-sugar biosynthesis; UDP-N-acetyl-alpha-D-glucosamine biosynthesis; N-acetyl-alpha-D-glucosamine 1-phosphate from alpha-D-glucosamine 6-phosphate (route II): step 2/2. Its pathway is nucleotide-sugar biosynthesis; UDP-N-acetyl-alpha-D-glucosamine biosynthesis; UDP-N-acetyl-alpha-D-glucosamine from N-acetyl-alpha-D-glucosamine 1-phosphate: step 1/1. It participates in bacterial outer membrane biogenesis; LPS lipid A biosynthesis. In terms of biological role, catalyzes the last two sequential reactions in the de novo biosynthetic pathway for UDP-N-acetylglucosamine (UDP-GlcNAc). The C-terminal domain catalyzes the transfer of acetyl group from acetyl coenzyme A to glucosamine-1-phosphate (GlcN-1-P) to produce N-acetylglucosamine-1-phosphate (GlcNAc-1-P), which is converted into UDP-GlcNAc by the transfer of uridine 5-monophosphate (from uridine 5-triphosphate), a reaction catalyzed by the N-terminal domain. The sequence is that of Bifunctional protein GlmU from Caulobacter vibrioides (strain ATCC 19089 / CIP 103742 / CB 15) (Caulobacter crescentus).